The sequence spans 37 residues: Delta-amaurobitoxin-Pl1b (37 aa).

Intrachain disulfides connect Cys2/Cys18, Cys9/Cys23, Cys17/Cys33, and Cys25/Cys31. The residue at position 37 (Ser37) is a Serine amide.

The protein belongs to the neurotoxin 07 (Beta/delta-agtx) family. 02 (aga-3) subfamily. As to expression, expressed by the venom gland.

It localises to the secreted. In terms of biological role, insecticidal toxin. Binds to site 4 of insect voltage-gated sodium channel (Nav) and inhibits channel inactivation. In vivo, it lethal to lepidopteran larvae. Has no adverse affects when intracerebroventricularly injected in mice at a dose of 0.2 ug, but causes reversible paralysis of legs when injected intracerebroventricularly in mice at a dose of 2.0 ug. This chain is Delta-amaurobitoxin-Pl1b, found in Pireneitega luctuosa (Tangled nest spider).